A 201-amino-acid polypeptide reads, in one-letter code: MAEKFIKHTGLVVPLDAANVDTDAIIPKQFLQKVTRTGFGAHLFNDWRFLDEKGQQPNPDFVLNFPQYQGASILLARENFGCGSSREHAPWALTDYGFKVVIAPSFADIFYGNSFNNQLLPVKLSDAEVDELFALVKANPGIHFDVDLEAQEVKAGEKTYHFTIDAFRRHCMMNGLDSIGLTLQHDDAIAAYEAKQPAFMN.

The protein belongs to the LeuD family. LeuD type 1 subfamily. Heterodimer of LeuC and LeuD.

The catalysed reaction is (2R,3S)-3-isopropylmalate = (2S)-2-isopropylmalate. The protein operates within amino-acid biosynthesis; L-leucine biosynthesis; L-leucine from 3-methyl-2-oxobutanoate: step 2/4. In terms of biological role, catalyzes the isomerization between 2-isopropylmalate and 3-isopropylmalate, via the formation of 2-isopropylmaleate. This is 3-isopropylmalate dehydratase small subunit from Escherichia coli O9:H4 (strain HS).